Reading from the N-terminus, the 211-residue chain is UPF0502 protein PC1_1804 (211 aa).

Residues 168–188 form a disordered region; that stretch reads SGDASDAAPEEEGAGDNSHQL.

Belongs to the UPF0502 family.

This is UPF0502 protein PC1_1804 from Pectobacterium carotovorum subsp. carotovorum (strain PC1).